Consider the following 1329-residue polypeptide: MSQEYIEDKEVTLTKLSSGRRLLEALLILIVLFAVWLMAALLSFNPSDPSWSQTAWHEPIHNLGGMPGAWLADTLFFIFGVMAYTIPVIIVGGCWFAWRHQSSDEYIDYFAVSLRIIGVLALILTSCGLAAINADDIWYFASGGVIGSLLSTTLQPLLHSSGGTIALLCVWAAGLTLFTGWSWVTIAEKLGGWILNILTFASNRTRRDDTWVDEDEYEDDEEYEDENHGKQHESRRARILRGALARRKRLAEKFINPMGRQTDAALFSGKRMDDDEEITYTARGVAADPDDVLFSGNRATQPEYDEYDPLLNGAPITEPVAVAAAATTATQSWAAPVEPVTQTPPVASVDVPPAQPTVAWQPVPGPQTGEPVIAPAPEGYPQQSQYAQPAVQYNEPLQQPVQPQQPYYAPAAEQPAQQPYYAPAPEQPVAGNAWQAEEQQSTFAPQSTYQTEQTYQQPAAQEPLYQQPQPVEQQPVVEPEPVVEETKPARPPLYYFEEVEEKRAREREQLAAWYQPIPEPVKEPEPIKSSLKAPSVAAVPPVEAAAAVSPLASGVKKATLATGAAATVAAPVFSLANSGGPRPQVKEGIGPQLPRPKRIRVPTRRELASYGIKLPSQRAAEEKAREAQRNQYDSGDQYNDDEIDAMQQDELARQFAQTQQQRYGEQYQHDVPVNAEDADAAAEAELARQFAQTQQQRYSGEQPAGANPFSLDDFEFSPMKALLDDGPHEPLFTPIVEPVQQPQQPVAPQQQYQQPQQPVPPQPQYQQPQQPVAPQPQYQQPQQPVAPQQQYQQPQQPVAPQQQYQQPQQPVAPQPQDTLLHPLLMRNGDSRPLHKPTTPLPSLDLLTPPPSEVEPVDTFALEQMARLVEARLADFRIKADVVNYSPGPVITRFELNLAPGVKAARISNLSRDLARSLSTVAVRVVEVIPGKPYVGLELPNKKRQTVYLREVLDNAKFRDNPSPLTVVLGKDIAGEPVVADLAKMPHLLVAGTTGSGKSVGVNAMILSMLYKAQPEDVRFIMIDPKMLELSVYEGIPHLLTEVVTDMKDAANALRWCVNEMERRYKLMSALGVRNLAGYNEKIAEADRMMRPIPDPYWKPGDSMDAQHPVLKKEPYIVVLVDEFADLMMTVGKKVEELIARLAQKARAAGIHLVLATQRPSVDVITGLIKANIPTRIAFTVSSKIDSRTILDQAGAESLLGMGDMLYSGPNSTLPVRVHGAFVRDQEVHAVVQDWKARGRPQYVDGITSDSESEGGAGGFDGAEELDPLFDQAVQFVTEKRKASISGVQRQFRIGYNRAARIIEQMEAQGIVSEQGHNGNREVLAPPPFD.

The Cytoplasmic segment spans residues 1 to 24; the sequence is MSQEYIEDKEVTLTKLSSGRRLLE. Residues 25 to 44 form a helical membrane-spanning segment; the sequence is ALLILIVLFAVWLMAALLSF. Topologically, residues 45-74 are periplasmic; sequence NPSDPSWSQTAWHEPIHNLGGMPGAWLADT. The chain crosses the membrane as a helical span at residues 75–98; the sequence is LFFIFGVMAYTIPVIIVGGCWFAW. At 99–115 the chain is on the cytoplasmic side; sequence RHQSSDEYIDYFAVSLR. The chain crosses the membrane as a helical span at residues 116 to 132; that stretch reads IIGVLALILTSCGLAAI. At 133 to 162 the chain is on the periplasmic side; sequence NADDIWYFASGGVIGSLLSTTLQPLLHSSG. Residues 163–179 form a helical membrane-spanning segment; that stretch reads GTIALLCVWAAGLTLFT. The Cytoplasmic segment spans residues 180-1329; that stretch reads GWSWVTIAEK…REVLAPPPFD (1150 aa). A linker region spans residues 184-817; sequence VTIAEKLGGW…QQPVAPQPQD (634 aa). 6 disordered regions span residues 351–386, 434–489, 577–596, 604–639, 688–712, and 741–849; these read VPPA…QSQY, WQAE…TKPA, NSGG…LPRP, RREL…DQYN, RQFA…FSLD, and QPQQ…LTPP. Over residues 437–448 the composition is skewed to polar residues; the sequence is EEQQSTFAPQST. The segment covering 449-480 has biased composition (low complexity); that stretch reads YQTEQTYQQPAAQEPLYQQPQPVEQQPVVEPE. Residues 619–628 show a composition bias toward basic and acidic residues; the sequence is AAEEKAREAQ. Polar residues predominate over residues 690 to 699; that stretch reads FAQTQQQRYS. Low complexity-rich tracts occupy residues 741-756, 764-816, and 836-846; these read QPQQ…QQPQ, QYQQ…PQPQ, and PTTPLPSLDLL. Positions 818-943 are alpha; it reads TLLHPLLMRN…VGLELPNKKR (126 aa). A beta region spans residues 944 to 1258; that stretch reads QTVYLREVLD…DSESEGGAGG (315 aa). The FtsK domain maps to 974 to 1187; it reads GEPVVADLAK…FTVSSKIDSR (214 aa). 994-999 contacts ATP; sequence GSGKSV. The gamma stretch occupies residues 1259–1329; that stretch reads FDGAEELDPL…REVLAPPPFD (71 aa).

The protein belongs to the FtsK/SpoIIIE/SftA family. In terms of assembly, homohexamer. Forms a ring that surrounds DNA. Interacts with FtsZ, FtsQ, FtsL and FtsI.

Its subcellular location is the cell inner membrane. Its function is as follows. Essential cell division protein that coordinates cell division and chromosome segregation. The N-terminus is involved in assembly of the cell-division machinery. The C-terminus functions as a DNA motor that moves dsDNA in an ATP-dependent manner towards the dif recombination site, which is located within the replication terminus region. Translocation stops specifically at Xer-dif sites, where FtsK interacts with the Xer recombinase, allowing activation of chromosome unlinking by recombination. FtsK orienting polar sequences (KOPS) guide the direction of DNA translocation. FtsK can remove proteins from DNA as it translocates, but translocation stops specifically at XerCD-dif site, thereby preventing removal of XerC and XerD from dif. Stoppage of translocation is accompanied by a reduction in ATPase activity. Also stimulates topoisomerase 4 activity. Required for the targeting of FtsQ, FtsL and FtsI to the septum. The polypeptide is DNA translocase FtsK (ftsK) (Escherichia coli (strain K12)).